The sequence spans 596 residues: Elongation factor 4 (596 aa).

Positions 2–184 (KHIRNFSIIA…EIVAKIPPPV (183 aa)) constitute a tr-type G domain. GTP-binding positions include 14-19 (DHGKST) and 131-134 (NKID).

It belongs to the TRAFAC class translation factor GTPase superfamily. Classic translation factor GTPase family. LepA subfamily.

The protein localises to the cell inner membrane. The catalysed reaction is GTP + H2O = GDP + phosphate + H(+). Functionally, required for accurate and efficient protein synthesis under certain stress conditions. May act as a fidelity factor of the translation reaction, by catalyzing a one-codon backward translocation of tRNAs on improperly translocated ribosomes. Back-translocation proceeds from a post-translocation (POST) complex to a pre-translocation (PRE) complex, thus giving elongation factor G a second chance to translocate the tRNAs correctly. Binds to ribosomes in a GTP-dependent manner. This Shewanella denitrificans (strain OS217 / ATCC BAA-1090 / DSM 15013) protein is Elongation factor 4.